The chain runs to 416 residues: Serine hydroxymethyltransferase 1 (416 aa).

(6S)-5,6,7,8-tetrahydrofolate-binding positions include leucine 121 and 125–127; that span reads GHL. Lysine 229 carries the post-translational modification N6-(pyridoxal phosphate)lysine. Residues glutamate 245 and 354–356 each bind (6S)-5,6,7,8-tetrahydrofolate; that span reads SPF.

The protein belongs to the SHMT family. In terms of assembly, homodimer. Pyridoxal 5'-phosphate serves as cofactor.

It localises to the cytoplasm. The enzyme catalyses (6R)-5,10-methylene-5,6,7,8-tetrahydrofolate + glycine + H2O = (6S)-5,6,7,8-tetrahydrofolate + L-serine. It functions in the pathway one-carbon metabolism; tetrahydrofolate interconversion. The protein operates within amino-acid biosynthesis; glycine biosynthesis; glycine from L-serine: step 1/1. In terms of biological role, catalyzes the reversible interconversion of serine and glycine with tetrahydrofolate (THF) serving as the one-carbon carrier. This reaction serves as the major source of one-carbon groups required for the biosynthesis of purines, thymidylate, methionine, and other important biomolecules. Also exhibits THF-independent aldolase activity toward beta-hydroxyamino acids, producing glycine and aldehydes, via a retro-aldol mechanism. The sequence is that of Serine hydroxymethyltransferase 1 from Photobacterium profundum (strain SS9).